A 457-amino-acid polypeptide reads, in one-letter code: Phosphomethylpyrimidine synthase (457 aa).

Substrate-binding positions include N80, M109, Y139, H175, S195 to G197, D236 to R239, and E275. H279 is a binding site for Zn(2+). Y302 serves as a coordination point for substrate. Residue H343 participates in Zn(2+) binding. Residues C423, C426, and C431 each contribute to the [4Fe-4S] cluster site.

Belongs to the ThiC family. The cofactor is [4Fe-4S] cluster.

The enzyme catalyses 5-amino-1-(5-phospho-beta-D-ribosyl)imidazole + S-adenosyl-L-methionine = 4-amino-2-methyl-5-(phosphooxymethyl)pyrimidine + CO + 5'-deoxyadenosine + formate + L-methionine + 3 H(+). The protein operates within cofactor biosynthesis; thiamine diphosphate biosynthesis. Catalyzes the synthesis of the hydroxymethylpyrimidine phosphate (HMP-P) moiety of thiamine from aminoimidazole ribotide (AIR) in a radical S-adenosyl-L-methionine (SAM)-dependent reaction. This is Phosphomethylpyrimidine synthase from Trichormus variabilis (strain ATCC 29413 / PCC 7937) (Anabaena variabilis).